A 334-amino-acid chain; its full sequence is UDP-N-acetylenolpyruvoylglucosamine reductase (334 aa).

Residues 16 to 186 (INVFAKKIII…LSVGIKLPKT (171 aa)) enclose the FAD-binding PCMH-type domain. Arg-162 is an active-site residue. Ser-232 (proton donor) is an active-site residue. Glu-329 is an active-site residue.

Belongs to the MurB family. Requires FAD as cofactor.

It localises to the cytoplasm. The enzyme catalyses UDP-N-acetyl-alpha-D-muramate + NADP(+) = UDP-N-acetyl-3-O-(1-carboxyvinyl)-alpha-D-glucosamine + NADPH + H(+). It functions in the pathway cell wall biogenesis; peptidoglycan biosynthesis. Functionally, cell wall formation. This chain is UDP-N-acetylenolpyruvoylglucosamine reductase, found in Buchnera aphidicola subsp. Baizongia pistaciae (strain Bp).